The chain runs to 161 residues: MNFTGYSRFLIVFVALVGALVLPSKAQDSPQDYLRVHNQARGAVGVGPMQWDERVAAYARSYAEQLRGNCRLIHSGGPYGENLAWGSGDLSGVSAVNMWVSEKANYNYAANTCNGVCGHYTQVVWRKSVRLGCAKVRCNNGGTIISCNYDPRGNYVNEKPY.

A signal peptide spans 1–26 (MNFTGYSRFLIVFVALVGALVLPSKA). Positions 34–149 (LRVHNQARGA…NGGTIISCNY (116 aa)) constitute an SCP domain. Cystine bridges form between cysteine 70-cysteine 138, cysteine 113-cysteine 117, and cysteine 133-cysteine 147.

Belongs to the CRISP family.

The protein resides in the secreted. Its subcellular location is the extracellular space. It localises to the apoplast. Its function is as follows. Partially responsible for acquired pathogen resistance. The protein is Pathogenesis-related protein 1 of Arabidopsis thaliana (Mouse-ear cress).